The following is a 201-amino-acid chain: Small ribosomal subunit protein uS4 (201 aa).

The tract at residues 1-42 (MARYTGPATRKSRRLGVDLVGGDQSFEKRPYPPGQHGRARIK) is disordered. Positions 91 to 157 (SRLDNVVYRA…LPFQIARETA (67 aa)) constitute an S4 RNA-binding domain.

It belongs to the universal ribosomal protein uS4 family. In terms of assembly, part of the 30S ribosomal subunit. Contacts protein S5. The interaction surface between S4 and S5 is involved in control of translational fidelity.

Its function is as follows. One of the primary rRNA binding proteins, it binds directly to 16S rRNA where it nucleates assembly of the body of the 30S subunit. With S5 and S12 plays an important role in translational accuracy. In Mycolicibacterium smegmatis (strain ATCC 700084 / mc(2)155) (Mycobacterium smegmatis), this protein is Small ribosomal subunit protein uS4.